The following is a 156-amino-acid chain: MPRRRVVAKREILPDPKFGSQILAKFMNHVMVSGKKSVSERIVYGALDIITERKGLDSLETFEKALDNIRPAVEVKSRRVGGATYQVPVEVRPSRRTALAMRWLVDAARKRGEKSMPARLAGEVMDAAEGKGAAMKKREDVHRMAEANKAFSHFRF.

It belongs to the universal ribosomal protein uS7 family. As to quaternary structure, part of the 30S ribosomal subunit. Contacts proteins S9 and S11.

Functionally, one of the primary rRNA binding proteins, it binds directly to 16S rRNA where it nucleates assembly of the head domain of the 30S subunit. Is located at the subunit interface close to the decoding center, probably blocks exit of the E-site tRNA. The sequence is that of Small ribosomal subunit protein uS7 from Alcanivorax borkumensis (strain ATCC 700651 / DSM 11573 / NCIMB 13689 / SK2).